Here is a 490-residue protein sequence, read N- to C-terminus: MVPVVALVGRPNVGKSTLFNRLTRTRDALVADFPGLTRDRKYGRAEIEGREFICIDTGGIDGTEDGVETRMAEQSLLAIEEADVVLFMVDARSGLMPADEAIAKHLRSREKPTFLVANKTDGLDPDQAVVDFYALGLGEIYPIAASHGRGVLSLLEHVLLPWMEDLAPQEEVDEDAEYWAQFEAEENGEEEEEDDFDPQSLPIKLAIVGRPNVGKSTLTNRILGEERVVVYDMPGTTRDSIYIPMERDGREYVLIDTAGVRKRGKITDAVEKFSVIKTLQAIEDANVVMLVIDAREGISDQDLSLLGFILNSGRSLVIVVNKWDGLSQEVKEQVKETLDFRLGFIDFARVHFISALHGSGVGNLFESVREAYDSSTRRVGTSMLTRIMTMAVEDHQPPLVRGRRVKLKYAHAGGYNPPIVVIHGNQVKDLPDSYKRYLMNYFRKSLDVMGSPIRIQFKEGENPYANKRNTLTPTQMRKRKRLMKHIKKSK.

EngA-type G domains are found at residues Pro-3 to Leu-166 and Ile-203 to Thr-376. GTP-binding positions include Gly-9–Ser-16, Asp-56–Ile-60, Asn-118–Asp-121, Gly-209–Ser-216, Asp-256–Val-260, and Asn-321–Asp-324. The KH-like domain occupies Arg-377–Glu-461.

Belongs to the TRAFAC class TrmE-Era-EngA-EngB-Septin-like GTPase superfamily. EngA (Der) GTPase family. In terms of assembly, associates with the 50S ribosomal subunit.

In terms of biological role, GTPase that plays an essential role in the late steps of ribosome biogenesis. This Escherichia coli O81 (strain ED1a) protein is GTPase Der.